The chain runs to 413 residues: uncharacterized protein (413 aa).

Transmembrane regions (helical) follow at residues 42–62 (FLGGFSSFSILYCVQSILPVF), 75–95 (LSLSAATATMSIGTLFIGPLS), 109–129 (LIAAVLTIICSISNNWTVIVF), 133–153 (LTGLALSGVVAVAMTYIVEEV), 157–179 (SVSFCMGLYISGNTIGGCSGRIL), 191–211 (IAFIVIGFFSLMSSCLFLYFL), 238–258 (PTLLILFAIGFMLMGSFITIF), 265–285 (LMLSPFFLSSSNIGFLSIIYL), 304–324 (SSILRIALLLMILGLLMTQYN), 326–346 (IFIIILGLVIFSSGFFASHSI), 362–382 (ATSLYLFFYYLGSSIFGTFGG), and 383–403 (FFWFYLKWIGISSFIIIILIF).

It belongs to the major facilitator superfamily.

The protein localises to the cell membrane. This is an uncharacterized protein from Buchnera aphidicola subsp. Schizaphis graminum (strain Sg).